We begin with the raw amino-acid sequence, 357 residues long: MDVTHDMNGQKKWMQLPRNVVIGNGVINEVRDVCTDLKLIDNALVVTGKSTKGIAGEIVQDSLQDAGQNVELVISESASMKEVERIRKHAIESGTKYFLGVGSGKTIDVAKLAATDLEVPFISVPTAASHDGIVSSRASIKDGKTTTSVQANAPMAVIADTEIIANAPYRLLAAGCGDIISNCTAVLDWQLASRLQNVQFSEYAAALASMTAQILIDSADSIKPELESSVRMVVKALVSSGVAMSIAGSSRPASGSEHMFSHALDRVADEPALHGEQCGVGTILMMYLHGGDWKKISDALKLIGAPTTAKELGIEDKYILEALVLSHTIRPERYTILGTGLTPDAAEIVARKTKVIS.

NAD(+) contacts are provided by residues 104–108 (GKTID) and 126–129 (TAAS). Asp131 is a binding site for substrate. Ser135 serves as a coordination point for NAD(+). A substrate-binding site is contributed by Asp178. Zn(2+) is bound by residues Asp178 and His258. A substrate-binding site is contributed by His262. Position 274 (His274) interacts with Zn(2+).

Belongs to the glycerol-1-phosphate dehydrogenase family. The cofactor is Zn(2+).

Its subcellular location is the cytoplasm. The enzyme catalyses sn-glycerol 1-phosphate + NAD(+) = dihydroxyacetone phosphate + NADH + H(+). It catalyses the reaction sn-glycerol 1-phosphate + NADP(+) = dihydroxyacetone phosphate + NADPH + H(+). Its pathway is membrane lipid metabolism; glycerophospholipid metabolism. Functionally, catalyzes the NAD(P)H-dependent reduction of dihydroxyacetonephosphate (DHAP or glycerone phosphate) to glycerol 1-phosphate (G1P). The G1P thus generated is used as the glycerophosphate backbone of phospholipids in the cellular membranes of Archaea. This chain is Glycerol-1-phosphate dehydrogenase [NAD(P)+], found in Methanococcoides burtonii (strain DSM 6242 / NBRC 107633 / OCM 468 / ACE-M).